The following is a 264-amino-acid chain: ORC1-type DNA replication protein 2 (264 aa).

ATP-binding positions include 73 to 77 (TGKSL), Tyr220, and Arg232.

This sequence belongs to the CDC6/cdc18 family.

Its function is as follows. Involved in regulation of DNA replication. The protein is ORC1-type DNA replication protein 2 (orc2) of Halobacterium salinarum (strain ATCC 700922 / JCM 11081 / NRC-1) (Halobacterium halobium).